An 878-amino-acid polypeptide reads, in one-letter code: Phosphoenolpyruvate carboxylase (878 aa).

Active-site residues include His-140 and Lys-545.

This sequence belongs to the PEPCase type 1 family. Requires Mg(2+) as cofactor.

The catalysed reaction is oxaloacetate + phosphate = phosphoenolpyruvate + hydrogencarbonate. Functionally, forms oxaloacetate, a four-carbon dicarboxylic acid source for the tricarboxylic acid cycle. The sequence is that of Phosphoenolpyruvate carboxylase from Pseudomonas syringae pv. syringae (strain B728a).